The following is a 216-amino-acid chain: Large ribosomal subunit protein uL24m (216 aa).

The transit peptide at M1–L9 directs the protein to the mitochondrion. Position 24 is a phosphoserine (S24). One can recognise a KOW domain in the interval L56–E89.

This sequence belongs to the universal ribosomal protein uL24 family. As to quaternary structure, component of the mitochondrial ribosome large subunit (39S) which comprises a 16S rRNA and about 50 distinct proteins.

The protein localises to the mitochondrion. In Mus musculus (Mouse), this protein is Large ribosomal subunit protein uL24m (Mrpl24).